A 103-amino-acid chain; its full sequence is Toxin BMLCL (103 aa).

An N-terminal signal peptide occupies residues 1–21; that stretch reads MKTLLLTLVVVTIICLDLGYT. 5 disulfide bridges follow: Cys-24/Cys-45, Cys-27/Cys-37, Cys-38/Cys-72, Cys-76/Cys-90, and Cys-91/Cys-96.

Belongs to the three-finger toxin family. Ancestral subfamily. Orphan group XVII sub-subfamily. Expressed by the venom gland.

It is found in the secreted. In terms of biological role, interacts with high efficiency with both neuronal alpha-7/CHRNA7 and muscle type nicotinic acetylcholine receptors (nAChRs). Tested on human alpha-7/CHRNA7 nAChR (IC(50)=42 nM), T.californica muscle receptor (IC(50)=31 nM), L.stagnalis and A.californica acetylcholine-binding proteins (IC(50)=333 nM and 3.4 uM, respectively). This is Toxin BMLCL from Bungarus multicinctus (Many-banded krait).